Reading from the N-terminus, the 745-residue chain is Multiple C2 domain and transmembrane region protein 13 (745 aa).

The disordered stretch occupies residues 1–30 (MAANKDEFSVKQISPKLGGERGARNPYGPT). C2 domains follow at residues 21–139 (RGAR…PQRY), 171–293 (DASE…SAPA), and 326–453 (AEES…ACSY). Asp-56, Asp-61, Asp-106, and Asn-110 together coordinate Ca(2+). The next 2 membrane-spanning stretches (helical) occupy residues 568-588 (SLIVWLAIYLVVVPCIVLVGL) and 688-708 (FYCWLICVLVALCWYNIPMWL).

Belongs to the MCTP family. Requires Ca(2+) as cofactor. As to expression, expressed in incipient leaf primordia.

It localises to the cell membrane. It is found in the cytoplasm. In terms of biological role, may function as a signaling molecule by regulating the trafficking of other regulators. This chain is Multiple C2 domain and transmembrane region protein 13, found in Arabidopsis thaliana (Mouse-ear cress).